Reading from the N-terminus, the 177-residue chain is Large ribosomal subunit protein uL6 (177 aa).

It belongs to the universal ribosomal protein uL6 family. In terms of assembly, part of the 50S ribosomal subunit.

This protein binds to the 23S rRNA, and is important in its secondary structure. It is located near the subunit interface in the base of the L7/L12 stalk, and near the tRNA binding site of the peptidyltransferase center. This Bordetella bronchiseptica (strain ATCC BAA-588 / NCTC 13252 / RB50) (Alcaligenes bronchisepticus) protein is Large ribosomal subunit protein uL6.